Reading from the N-terminus, the 291-residue chain is D-alanyl-D-alanine carboxypeptidase (291 aa).

The N-terminal stretch at 1 to 29 (MRLRRAAATVITTGALLAAGTLGATPATA) is a signal peptide. S64 serves as the catalytic Acyl-ester intermediate. The active-site Proton acceptor is K67. Residue S125 is part of the active site. Residue K242 coordinates substrate.

This sequence belongs to the peptidase S11 family.

It localises to the secreted. The catalysed reaction is Preferential cleavage: (Ac)2-L-Lys-D-Ala-|-D-Ala. Also transpeptidation of peptidyl-alanyl moieties that are N-acyl substituents of D-alanine.. It participates in cell wall biogenesis; peptidoglycan biosynthesis. Its function is as follows. Removes C-terminal D-alanyl residues from sugar-peptide cell wall precursors. The polypeptide is D-alanyl-D-alanine carboxypeptidase (Streptomyces sp. (strain K15)).